Consider the following 74-residue polypeptide: Metallothionein-like protein type 2 (74 aa).

This sequence belongs to the metallothionein superfamily. Type 15 family.

Its function is as follows. Metallothioneins have a high content of cysteine residues that bind various heavy metals. This is Metallothionein-like protein type 2 from Nicotiana plumbaginifolia (Leadwort-leaved tobacco).